Here is a 304-residue protein sequence, read N- to C-terminus: MSDFFNSGWSLYVAGITVVSLIFCLVVLIVASRRKVMADDNTTGHVWDEDLQELNNPLPRWWAGLFLVTIAFAVIYLALYPGLGSNKGTLDWTSTGQHSAEMEKARAQMAPLYAKFVSQPAEALAKDPQAMAIGERLFANNCAQCHGADARGSKGFPNLTDNDWLHGGTHDKIKETITGGRVGNMPPMAAAVGTPEDVKNVAQYVLSLSGAPHNEVAAQLGKAKFAVCAACHGPDGKGMQAVGSANLTDKIWLHGLRRTGHHRLINNGKTNIMPAQASRLSPEQIHVLGAYVWSLSQTSTVAAR.

2 helical membrane passes run 11–31 (LYVA…LIVA) and 61–81 (WWAG…ALYP). Cytochrome c domains follow at residues 129–209 (QAMA…LSLS) and 216–296 (VAAQ…WSLS). The heme c site is built by Cys142, Cys145, His146, Met185, Cys228, Cys231, His232, and Met273.

Belongs to the CcoP / FixP family. Component of the cbb3-type cytochrome c oxidase at least composed of CcoN, CcoO, CcoQ and CcoP. The cofactor is heme c.

It localises to the cell inner membrane. The protein operates within energy metabolism; oxidative phosphorylation. C-type cytochrome. Part of the cbb3-type cytochrome c oxidase complex. CcoP subunit is required for transferring electrons from donor cytochrome c via its heme groups to CcoO subunit. From there, electrons are shuttled to the catalytic binuclear center of CcoN subunit where oxygen reduction takes place. The complex also functions as a proton pump. The sequence is that of Cbb3-type cytochrome c oxidase subunit CcoP from Rubrivivax gelatinosus (Rhodocyclus gelatinosus).